The chain runs to 609 residues: Pescadillo homolog (609 aa).

Residues 320-413 (KLKNLFKGLK…KLLPTNKYFI (94 aa)) enclose the BRCT domain. Disordered stretches follow at residues 443 to 462 (DEFE…DEDF) and 488 to 609 (ALNS…EILA). Basic and acidic residues-rich tracts occupy residues 444–453 (EFEKQERAEG) and 488–498 (ALNSGEAKKEQ). Residues 481–509 (FREEKAEALNSGEAKKEQAEEDNEDDDQE) are a coiled coil. Positions 499-512 (AEEDNEDDDQEPDQ) are enriched in acidic residues. 2 stretches are compositionally biased toward basic and acidic residues: residues 513-524 (DETKKQRSEKKQ) and 533-552 (VFKE…EALR). Residues 539-607 (KEQKQLTKQE…QKRKAQRKEI (69 aa)) are a coiled coil. The span at 554–564 (KMVKSRHKKLY) shows a compositional bias: basic residues. Basic and acidic residues predominate over residues 567 to 609 (LLDKQKKATKEANLLREKRQQIDKQKRKEQTQKRKAQRKEILA).

Belongs to the pescadillo family.

Its subcellular location is the nucleus. The protein resides in the nucleolus. The protein localises to the nucleoplasm. In terms of biological role, required for maturation of ribosomal RNAs and formation of the large ribosomal subunit. This is Pescadillo homolog from Aedes aegypti (Yellowfever mosquito).